We begin with the raw amino-acid sequence, 618 residues long: Methylmalonyl-CoA mutase small subunit (618 aa).

Belongs to the methylmalonyl-CoA mutase family. In terms of assembly, heterodimer of an alpha and a beta chain. The cofactor is adenosylcob(III)alamin.

It carries out the reaction (R)-methylmalonyl-CoA = succinyl-CoA. It functions in the pathway metabolic intermediate metabolism; propanoyl-CoA degradation; succinyl-CoA from propanoyl-CoA: step 3/3. Its function is as follows. Catalyzes the isomerization of succinyl-CoA to methylmalonyl-CoA during synthesis of propionate from tricarboxylic acid-cycle intermediates. The protein is Methylmalonyl-CoA mutase small subunit (mutA) of Porphyromonas gingivalis (strain ATCC BAA-308 / W83).